The primary structure comprises 296 residues: Probable endonuclease 4 (296 aa).

Residues H68, H109, E144, D178, H181, H213, D226, H228, and E258 each coordinate Zn(2+).

Belongs to the AP endonuclease 2 family. It depends on Zn(2+) as a cofactor.

The enzyme catalyses Endonucleolytic cleavage to 5'-phosphooligonucleotide end-products.. Endonuclease IV plays a role in DNA repair. It cleaves phosphodiester bonds at apurinic or apyrimidinic (AP) sites, generating a 3'-hydroxyl group and a 5'-terminal sugar phosphate. The sequence is that of Probable endonuclease 4 from Staphylococcus carnosus (strain TM300).